The following is a 152-amino-acid chain: Deoxyuridine 5'-triphosphate nucleotidohydrolase (152 aa).

Residues Arg-71 to Gly-73, Asn-84, Leu-88 to Asp-90, and Met-98 contribute to the substrate site.

The protein belongs to the dUTPase family. The cofactor is Mg(2+).

It catalyses the reaction dUTP + H2O = dUMP + diphosphate + H(+). Its pathway is pyrimidine metabolism; dUMP biosynthesis; dUMP from dCTP (dUTP route): step 2/2. Functionally, this enzyme is involved in nucleotide metabolism: it produces dUMP, the immediate precursor of thymidine nucleotides and it decreases the intracellular concentration of dUTP so that uracil cannot be incorporated into DNA. The sequence is that of Deoxyuridine 5'-triphosphate nucleotidohydrolase from Shewanella denitrificans (strain OS217 / ATCC BAA-1090 / DSM 15013).